Here is a 264-residue protein sequence, read N- to C-terminus: Thymidylate synthase (264 aa).

Residue Arg-21 coordinates dUMP. Residue His-51 coordinates (6R)-5,10-methylene-5,6,7,8-tetrahydrofolate. 126–127 is a binding site for dUMP; sequence RR. Residue Cys-146 is the Nucleophile of the active site. DUMP contacts are provided by residues 166–169, Asn-177, and 207–209; these read RSAD and HIY. Position 169 (Asp-169) interacts with (6R)-5,10-methylene-5,6,7,8-tetrahydrofolate. (6R)-5,10-methylene-5,6,7,8-tetrahydrofolate is bound at residue Ser-263.

Belongs to the thymidylate synthase family. Bacterial-type ThyA subfamily. In terms of assembly, homodimer.

The protein resides in the cytoplasm. It catalyses the reaction dUMP + (6R)-5,10-methylene-5,6,7,8-tetrahydrofolate = 7,8-dihydrofolate + dTMP. It participates in pyrimidine metabolism; dTTP biosynthesis. Functionally, catalyzes the reductive methylation of 2'-deoxyuridine-5'-monophosphate (dUMP) to 2'-deoxythymidine-5'-monophosphate (dTMP) while utilizing 5,10-methylenetetrahydrofolate (mTHF) as the methyl donor and reductant in the reaction, yielding dihydrofolate (DHF) as a by-product. This enzymatic reaction provides an intracellular de novo source of dTMP, an essential precursor for DNA biosynthesis. The chain is Thymidylate synthase from Phocaeicola vulgatus (strain ATCC 8482 / DSM 1447 / JCM 5826 / CCUG 4940 / NBRC 14291 / NCTC 11154) (Bacteroides vulgatus).